Reading from the N-terminus, the 165-residue chain is uncharacterized protein (165 aa).

Residues 10 to 27 form a helical membrane-spanning segment; it reads VSLTIVFVLFFSADVSLT.

Its subcellular location is the membrane. This is an uncharacterized protein from Saccharomyces cerevisiae (strain ATCC 204508 / S288c) (Baker's yeast).